A 218-amino-acid polypeptide reads, in one-letter code: Glutathione S-transferase Mu 1 (218 aa).

The region spanning 2-88 (PMILGYWNVR…YLARKHHLCG (87 aa)) is the GST N-terminal domain. Glutathione-binding positions include 7–8 (YW), 43–46 (RSQW), K50, and 59–60 (NL). A Phosphoserine modification is found at S67. 72 to 73 (QS) lines the glutathione pocket. In terms of domain architecture, GST C-terminal spans 90–208 (TEEERIRADI…KSSRYLSTPI (119 aa)). Position 116 (Y116) interacts with substrate. Phosphoserine occurs at positions 205 and 210.

It belongs to the GST superfamily. Mu family. As to quaternary structure, homodimer or heterodimer.

The protein localises to the cytoplasm. It carries out the reaction RX + glutathione = an S-substituted glutathione + a halide anion + H(+). The catalysed reaction is prostaglandin A2 + glutathione = prostaglandin A2-S-(R)-glutathione. It catalyses the reaction prostaglandin J2 + glutathione = prostaglandin J2-S-(R)-glutathione. The enzyme catalyses prostaglandin J2 + glutathione = prostaglandin J2-S-(S)-glutathione. It carries out the reaction prostaglandin A2 + glutathione = prostaglandin A2-S-(S)-glutathione. The catalysed reaction is 11(S)-hydroxy-14(S),15(S)-epoxy-(5Z,8Z,12E)-eicosatrienoate + glutathione = (11S,15S)-dihydroxy-14(R)-S-glutathionyl-(5Z,8Z,12E)-eicosatrienoate. Conjugation of reduced glutathione to a wide number of exogenous and endogenous hydrophobic electrophiles. The olfactory GST may be crucial for the acuity of the olfactory process. Participates in the formation of novel hepoxilin regioisomers. In Rattus norvegicus (Rat), this protein is Glutathione S-transferase Mu 1.